A 1090-amino-acid chain; its full sequence is UPF0507 protein EC1118_1M3_1541g (1090 aa).

Positions 289-436 (FSVNQLLTDF…FEDFNKNTGN (148 aa)) constitute a VPS9 domain.

The protein belongs to the UPF0507 family.

This is UPF0507 protein EC1118_1M3_1541g from Saccharomyces cerevisiae (strain Lalvin EC1118 / Prise de mousse) (Baker's yeast).